Consider the following 412-residue polypeptide: Serine hydroxymethyltransferase (412 aa).

(6S)-5,6,7,8-tetrahydrofolate contacts are provided by residues L120 and 124 to 126 (GHL). K229 is modified (N6-(pyridoxal phosphate)lysine). 352–354 (SPF) is a (6S)-5,6,7,8-tetrahydrofolate binding site.

Belongs to the SHMT family. As to quaternary structure, homodimer. Pyridoxal 5'-phosphate is required as a cofactor.

The protein localises to the cytoplasm. The enzyme catalyses (6R)-5,10-methylene-5,6,7,8-tetrahydrofolate + glycine + H2O = (6S)-5,6,7,8-tetrahydrofolate + L-serine. It functions in the pathway one-carbon metabolism; tetrahydrofolate interconversion. It participates in amino-acid biosynthesis; glycine biosynthesis; glycine from L-serine: step 1/1. Its function is as follows. Catalyzes the reversible interconversion of serine and glycine with tetrahydrofolate (THF) serving as the one-carbon carrier. This reaction serves as the major source of one-carbon groups required for the biosynthesis of purines, thymidylate, methionine, and other important biomolecules. Also exhibits THF-independent aldolase activity toward beta-hydroxyamino acids, producing glycine and aldehydes, via a retro-aldol mechanism. The polypeptide is Serine hydroxymethyltransferase (Ruminiclostridium cellulolyticum (strain ATCC 35319 / DSM 5812 / JCM 6584 / H10) (Clostridium cellulolyticum)).